Reading from the N-terminus, the 828-residue chain is Protein ELFN1 (828 aa).

An N-terminal signal peptide occupies residues 1 to 27; sequence MAGRGWGALWVCVAAATLLHAGGLARA. The Extracellular portion of the chain corresponds to 28-418; it reads DCWLIEGDKG…VPSPSTATHY (391 aa). The N-linked (GlcNAc...) asparagine glycan is linked to N59. 5 LRR repeats span residues 61–82, 85–106, 109–130, 133–154, and 157–178; these read TIVD…SLSR, NLTY…AFSG, NLQV…MLRG, KLEY…SFWE, and NIVN…TFAG. 3 N-linked (GlcNAc...) asparagine glycosylation sites follow: N85, N90, and N122. The LRRCT domain maps to 190–252; that stretch reads NPFYCSCELL…LSKLQSVCTE (63 aa). N-linked (GlcNAc...) asparagine glycosylation is present at N210. A disordered region spans residues 259-291; the sequence is VVGPPRPASGRSQPGRSPPPPPPPEPSDMPCAD. Pro residues predominate over residues 274–285; that stretch reads RSPPPPPPPEPS. One can recognise a Fibronectin type-III domain in the interval 312–399; it reads QAEARPLIKV…HNHTCLTICL (88 aa). The stretch at 318–342 is one LRR 6 repeat; it reads LIKVKQLTQNSATITVQLPSPFHRM. N376 carries an N-linked (GlcNAc...) asparagine glycan. A helical membrane pass occupies residues 419–439; sequence IMTILGCLFGMVLVLGAVYYC. Over 440-828 the chain is Cytoplasmic; it reads LRRRRRQEEK…WKGVSAQHKS (389 aa). Phosphoserine is present on S461. 3 disordered regions span residues 517 to 552, 624 to 649, and 696 to 732; these read TPKA…QSSV, LQRH…VRSP, and KGRQ…GLGR. Residues 529–541 are compositionally biased toward basic and acidic residues; it reads RTGDPPERRDCEL. Low complexity predominate over residues 632 to 649; the sequence is AAGPPRASTSSSGSVRSP. S645 bears the Phosphoserine mark. Basic and acidic residues predominate over residues 696-705; the sequence is KGRQYGEHRH. Residues 713–727 are compositionally biased toward pro residues; sequence AEPPAPPGPPPPPPH.

In terms of assembly, interacts with PPP1CA.

It is found in the membrane. Its subcellular location is the cell projection. It localises to the dendrite. Its function is as follows. Postsynaptic protein that regulates circuit dynamics in the central nervous system by modulating the temporal dynamics of interneuron recruitment. Specifically present in excitatory synapses onto oriens-lacunosum molecular (OLM) interneurons and acts as a regulator of presynaptic release probability to direct the formation of highly facilitating pyramidal-OLM synapses. Inhibits phosphatase activity of protein phosphatase 1 (PP1) complexes. The polypeptide is Protein ELFN1 (ELFN1) (Homo sapiens (Human)).